A 1306-amino-acid polypeptide reads, in one-letter code: Receptor-type tyrosine-protein phosphatase C (1306 aa).

A signal peptide spans 1–25 (MTMYLWLKLLAFGFAFLDTEVFVTG). The Extracellular portion of the chain corresponds to 26–577 (QSPTPSPTGL…LHHSTSYNSK (552 aa)). The disordered stretch occupies residues 28–163 (PTPSPTGLTT…TASTFPTDPV (136 aa)). 2 stretches are compositionally biased toward polar residues: residues 52-61 (THTTAFSPAS) and 70-131 (SETT…SGSA). N-linked (GlcNAc...) asparagine glycosylation is found at asparagine 80, asparagine 92, asparagine 97, asparagine 186, asparagine 192, asparagine 199, asparagine 234, asparagine 262, asparagine 272, and asparagine 278. Residue asparagine 286 is glycosylated (N-linked (GlcNAc...) asparagine; atypical). N-linked (GlcNAc...) asparagine glycans are attached at residues asparagine 337, asparagine 380, asparagine 421, asparagine 470, asparagine 490, and asparagine 531. Fibronectin type-III domains lie at 391–483 (SPGE…TKSA) and 484–576 (PPSQ…SYNS). Residues 578–598 (ALIAFLAFLIIVTSIALLVVL) form a helical membrane-spanning segment. Residues 599-1306 (YKIYDLHKKR…PASPALNQGS (708 aa)) lie on the Cytoplasmic side of the membrane. Tyrosine-protein phosphatase domains follow at residues 653–912 (FLAE…LVEY) and 944–1228 (LEAE…IAST). Tyrosine 683 carries the post-translational modification Phosphotyrosine. Substrate contacts are provided by residues aspartate 821, 853-859 (CSAGVGR), and glutamine 897. The Phosphocysteine intermediate role is filled by cysteine 853. Phosphoserine occurs at positions 975, 994, 997, 1001, 1004, 1005, and 1009. The tract at residues 993–1014 (MSKESEHDSDESSDDDSDSEEP) is disordered. Residues 999–1012 (HDSDESSDDDSDSE) show a composition bias toward acidic residues. Residue cysteine 1169 is the Phosphocysteine intermediate of the active site. The segment at 1261–1306 (CVNPLGAPEKLPEAKEQAEGSEPTSGTEGPEHSVNGPASPALNQGS) is disordered. Serine 1299 is modified (phosphoserine).

Belongs to the protein-tyrosine phosphatase family. Receptor class 1/6 subfamily. As to quaternary structure, binds GANAB and PRKCSH. Interacts with SKAP1. Interacts with DPP4; the interaction is enhanced in an interleukin-12-dependent manner in activated lymphocytes. Interacts with CD53; this interaction stabilizes PTPRC on the membrane and is required for optimal phosphatase activity. Interacts with CLEC10A. In terms of assembly, does not interact with CLEC10A. As to quaternary structure, (Microbial infection) Interacts with human cytomegalovirus protein UL11; the interaction is required for binding of UL11 to T-cells. Post-translationally, heavily N- and O-glycosylated. As to expression, isoform 1: Detected in thymocytes. Isoform 2: Detected in thymocytes. Isoform 3: Detected in thymocytes. Isoform 4: Not detected in thymocytes. Isoform 5: Detected in thymocytes. Isoform 6: Not detected in thymocytes. Isoform 7: Detected in thymocytes. Isoform 8: Not detected in thymocytes.

It is found in the cell membrane. It localises to the membrane raft. The protein resides in the synapse. It catalyses the reaction O-phospho-L-tyrosyl-[protein] + H2O = L-tyrosyl-[protein] + phosphate. Functionally, protein tyrosine-protein phosphatase required for T-cell activation through the antigen receptor. Acts as a positive regulator of T-cell coactivation upon binding to DPP4. The first PTPase domain has enzymatic activity, while the second one seems to affect the substrate specificity of the first one. Upon T-cell activation, recruits and dephosphorylates SKAP1 and FYN. Dephosphorylates LYN, and thereby modulates LYN activity. Interacts with CLEC10A at antigen presenting cell-T cell contact; CLEC10A on immature dendritic cells recognizes Tn antigen-carrying PTPRC/CD45 receptor on effector T cells and modulates T cell activation threshold to limit autoreactivity. Its function is as follows. (Microbial infection) Acts as a receptor for human cytomegalovirus protein UL11 and mediates binding of UL11 to T-cells, leading to reduced induction of tyrosine phosphorylation of multiple signaling proteins upon T-cell receptor stimulation and impaired T-cell proliferation. This chain is Receptor-type tyrosine-protein phosphatase C, found in Homo sapiens (Human).